The sequence spans 635 residues: Threonine--tRNA ligase (635 aa).

In terms of domain architecture, TGS spans 1–58 (MIQVTCDQKNYEVLEGTTAAELAKQLKNSHQFIGVLINERPRDLSTHLNEGDTLVFLT). The tract at residues 237–528 (DHRVLGAKLD…LIENFKGRFP (292 aa)) is catalytic. Zn(2+)-binding residues include C328, H379, and H505.

The protein belongs to the class-II aminoacyl-tRNA synthetase family. As to quaternary structure, homodimer. Zn(2+) is required as a cofactor.

The protein resides in the cytoplasm. The catalysed reaction is tRNA(Thr) + L-threonine + ATP = L-threonyl-tRNA(Thr) + AMP + diphosphate + H(+). In terms of biological role, catalyzes the attachment of threonine to tRNA(Thr) in a two-step reaction: L-threonine is first activated by ATP to form Thr-AMP and then transferred to the acceptor end of tRNA(Thr). Also edits incorrectly charged L-seryl-tRNA(Thr). The protein is Threonine--tRNA ligase of Chlamydia pneumoniae (Chlamydophila pneumoniae).